The primary structure comprises 166 residues: Ubiquitin-fold modifier-conjugating enzyme 1 (166 aa).

Catalysis depends on Cys-116, which acts as the Glycyl thioester intermediate.

It belongs to the ubiquitin-conjugating enzyme family. UFC1 subfamily.

Its function is as follows. E2-like enzyme which forms an intermediate with UFM1 via a thioester linkage. The polypeptide is Ubiquitin-fold modifier-conjugating enzyme 1 (Monosiga brevicollis (Choanoflagellate)).